Here is a 100-residue protein sequence, read N- to C-terminus: Small ribosomal subunit protein uS14c (100 aa).

Belongs to the universal ribosomal protein uS14 family. Part of the 30S ribosomal subunit.

Its subcellular location is the plastid. The protein resides in the chloroplast. In terms of biological role, binds 16S rRNA, required for the assembly of 30S particles. In Illicium oligandrum (Star anise), this protein is Small ribosomal subunit protein uS14c.